The following is a 345-amino-acid chain: MSDTTTLTIEALFQRVESIFLRAGLNAVQSGALARVITAGERDACKSHGIYRIEGALRTVKAAKVKPDAIPEVAEDDGTAIVKVNAMGGFANPAFELGLPALAERAKRLGLAALVINDCTHFSALWPEVEGLTSNGLAGLVMCPSYSTVAPTGGTKPLLGTNPFAFGWPRKDTSPYVFDFATSVAARGEIELHRRARKSLPEGWAVDADGNPTTDPEAALAGAMLPFGGHKGSAIGTMIELLAGIMIGDLTSPEVLDYLGTTTLAPFHGELIVAFSPEAFAKGRPGDPFQRAEVLFEAIIGQGARLPSGRRFAARAKSESEGITLTAAEMAGLDRLLEKGLDAVS.

Serine 47 acts as the Charge relay system in catalysis. The active-site Proton donor is the histidine 48. Arginine 52 lines the substrate pocket. 121–125 serves as a coordination point for NADP(+); that stretch reads HFSAL. Threonine 161 lines the substrate pocket. 179–181 serves as a coordination point for NADP(+); sequence DFA. 187–188 contributes to the substrate binding site; that stretch reads RG. The active-site Charge relay system is glutamate 189. Residues 230–231 and 305–311 contribute to the NADP(+) site; these read HK and RLPSGRR.

It belongs to the LDH2/MDH2 oxidoreductase family. In terms of assembly, homodimer.

It catalyses the reaction L-proline + NAD(+) = 1-pyrroline-2-carboxylate + NADH + H(+). It carries out the reaction L-proline + NADP(+) = 1-pyrroline-2-carboxylate + NADPH + H(+). Its function is as follows. Catalyzes the reduction of Delta(1)-pyrroline-2-carboxylate (Pyr2C) to L-proline, using NADPH as the electron donor. Is likely involved in a degradation pathway that converts trans-3-hydroxy-L-proline (t3LHyp) to L-proline, which would allow A.tumefaciens to grow on t3LHyp as a sole carbon source. This is Delta(1)-pyrroline-2-carboxylate reductase from Agrobacterium fabrum (strain C58 / ATCC 33970) (Agrobacterium tumefaciens (strain C58)).